A 192-amino-acid chain; its full sequence is RNA-free ribonuclease P (192 aa).

Belongs to the HARP family.

The catalysed reaction is Endonucleolytic cleavage of RNA, removing 5'-extranucleotides from tRNA precursor.. RNA-free RNase P that catalyzes the removal of the 5'-leader sequence from pre-tRNA to produce the mature 5'-terminus. The protein is RNA-free ribonuclease P of Alkalilimnicola ehrlichii (strain ATCC BAA-1101 / DSM 17681 / MLHE-1).